The following is a 341-amino-acid chain: Ribonucleoside-diphosphate reductase small chain A (341 aa).

The segment at Met1–Pro20 is disordered. Residues Asp87, Glu118, and His121 each coordinate Fe cation. Residue Tyr125 is part of the active site. The Fe cation site is built by Glu180, Glu214, and His217.

The protein belongs to the ribonucleoside diphosphate reductase small chain family. As to quaternary structure, homodimer and heterodimer with TSO2. Heterotetramer of two R1 and two R2 chains. A radical transfer pathway may occur between Tyr-125 of protein R2 and R1. Homodimer contains a dinuclear non-heme iron center and a stable tyrosyl radical essential for activity. A transfer pathway may occur between Tyr-125 of protein R2 and R1. Interacts with CSN7. Fe cation is required as a cofactor. As to expression, expressed in rosette leaves, cauline leaves, stems and flowers.

It localises to the cytoplasm. The catalysed reaction is a 2'-deoxyribonucleoside 5'-diphosphate + [thioredoxin]-disulfide + H2O = a ribonucleoside 5'-diphosphate + [thioredoxin]-dithiol. Inhibited by phenol, paracetamol, 2,4,6-trimethylphenol, resveratrol, furfuryl mercaptan, 2-thiophenthiol, phenylhydrazine, and hydroxyurea. Provides the precursors necessary for DNA synthesis. Catalyzes the biosynthesis of deoxyribonucleotides from the corresponding ribonucleotides. The polypeptide is Ribonucleoside-diphosphate reductase small chain A (RNR2A) (Arabidopsis thaliana (Mouse-ear cress)).